Consider the following 259-residue polypeptide: Global transcriptional regulator CodY (259 aa).

Residues 1–155 (MELLAKTRKL…SSTVVGMEIL (155 aa)) are GAF domain. The H-T-H motif DNA-binding region spans 203 to 222 (ASKIADRVGITRSVIVNALR). At Ser215 the chain carries Phosphoserine.

The protein belongs to the CodY family.

The protein resides in the cytoplasm. DNA-binding global transcriptional regulator which is involved in the adaptive response to starvation and acts by directly or indirectly controlling the expression of numerous genes in response to nutrient availability. During rapid exponential growth, CodY is highly active and represses genes whose products allow adaptation to nutrient depletion. The protein is Global transcriptional regulator CodY of Bacillus cereus (strain ATCC 10987 / NRS 248).